The primary structure comprises 357 residues: Protein RecA (357 aa).

G78–T85 contacts ATP.

Belongs to the RecA family.

The protein localises to the cytoplasm. Its function is as follows. Can catalyze the hydrolysis of ATP in the presence of single-stranded DNA, the ATP-dependent uptake of single-stranded DNA by duplex DNA, and the ATP-dependent hybridization of homologous single-stranded DNAs. It interacts with LexA causing its activation and leading to its autocatalytic cleavage. In Cereibacter sphaeroides (strain ATCC 17029 / ATH 2.4.9) (Rhodobacter sphaeroides), this protein is Protein RecA.